Consider the following 83-residue polypeptide: uncharacterized protein (83 aa).

This is an uncharacterized protein from Escherichia coli (strain K12).